The primary structure comprises 442 residues: HTH-type transcriptional regulator NorG (442 aa).

In terms of domain architecture, HTH gntR-type spans 2-46 (KIPSHRQLAIQYNVNRVTIIKSIELLEAEGFIYTKVGSGTYVNDY). Positions 6 to 25 (HRQLAIQYNVNRVTIIKSIE) form a DNA-binding region, H-T-H motif. Residue Lys-288 is modified to N6-(pyridoxal phosphate)lysine.

In the C-terminal section; belongs to the class-I pyridoxal-phosphate-dependent aminotransferase family. The cofactor is pyridoxal 5'-phosphate.

Positively regulates the expression of the NorB efflux pump and negatively regulates the expression of the AbcA efflux pump. Binds specifically to the promoters of norA, norB and norC and abcA genes. Could also have an aminotransferase activity. The polypeptide is HTH-type transcriptional regulator NorG (norG) (Staphylococcus aureus (strain USA300)).